The following is a 276-amino-acid chain: SKA complex subunit 1 homolog (276 aa).

A coiled-coil region spans residues 48–78; the sequence is VDVSLTAMEAQLQAVRRRLQEEREAFPKAKK.

The protein belongs to the SKA1 family.

The sequence is that of SKA complex subunit 1 homolog from Oryza sativa subsp. indica (Rice).